The sequence spans 390 residues: Chitinase-3-like protein 2 (390 aa).

The signal sequence occupies residues 1–26 (MGATTMDQKSLWAGVVVLLLLQGGSA). The region spanning 27–390 (YKLVCYFTNW…QAVKRSLGSL (364 aa)) is the GH18 domain. C31 and C56 form a disulfide bridge. Residue N35 is glycosylated (N-linked (GlcNAc...) asparagine). Chitin is bound by residues 75 to 76 (DK), 102 to 105 (GGYL), Y104, Y146, 210 to 213 (LSFD), D213, and W360.

Belongs to the glycosyl hydrolase 18 family. In terms of tissue distribution, highest expression in chondrocytes, followed by synoviocytes, lung and heart. Not detected in spleen, pancreas, and liver. May also be expressed in developing brain and placenta.

It localises to the secreted. In terms of biological role, lectin that binds chitooligosaccharides and other glycans with high affinity, but not heparin. Has no chitinase activity. The polypeptide is Chitinase-3-like protein 2 (CHI3L2) (Homo sapiens (Human)).